The following is a 578-amino-acid chain: Endonuclease GajA (578 aa).

The tract at residues 1 to 341 is ATPase domain; sequence MKFSNITIKN…RLIRVHSTEK (341 aa). 32-36 is an ATP binding site; sequence DIGKT. The segment at 370 to 510 is toprim domain; it reads LFAERVLLIE…LGERIYLSEI (141 aa). Residues E379, E383, D463, E464, and E513 each contribute to the a divalent metal cation site.

In terms of assembly, homotetramer. Forms the core of the anti-phage defense complex. Interacts with GajB; 2 GajB dimers dock at opposite sides of the GajA complex to form a 4:4 GajA-GajB assembly (GajAB). GajAB interacts with Bacillus phage Phi3T Gad1 protein; this interaction forms a 4:4:8 GajAB-Gad1 complex and leads to GajAB inhibition. Mg(2+) serves as cofactor. Requires Mn(2+) as cofactor.

Endonuclease activity inhibited by all NTPs, dNTPs, NDPs (at 0.5 mM, UDP not tested) and AMP-PNP; not inhibited by any tested NMP, dNMP or nucleoside. Inhibited by 100 mM NaCl, 100 mM KCl, 0.5 mM Co(2+) and 0.5 mM Ni(2+). In terms of biological role, component of antiviral defense system Gabija type I, composed of GajA and GajB. Endonuclease that nicks double-stranded DNA within the sequence 5'-TNNNCGGGNNA-3' in the absence of nucleotides (NTP, dNTP and NDPs), cleaving after C-1. Has no detected ATPase activity. Expression of Gabija type I in B.subtilis (strain BEST7003) confers resistance to phages phi105, phi29, rho14, SpBeta and SBSphiC. Expression of Gabija type I in E.coli B (strain ATCC 11303) confers resistance to phage T7. It is thought that this enzyme is strongly suppressed during physiological growth (in E.coli total nucleotide concentration is over 8.7 mM in mid-log phase), but during viral replication, when nucleotides are rapidly consumed, it is de-suppressed and degrades target DNA. In Bacillus cereus (strain VD045), this protein is Endonuclease GajA.